The sequence spans 182 residues: ATP synthase subunit delta, organellar chromatophore (182 aa).

This sequence belongs to the ATPase delta chain family. As to quaternary structure, F-type ATPases have 2 components, F(1) - the catalytic core - and F(0) - the membrane proton channel. F(1) has five subunits: alpha(3), beta(3), gamma(1), delta(1), epsilon(1). CF(0) has four main subunits: a(1), b(1), b'(1) and c(10-14). The alpha and beta chains form an alternating ring which encloses part of the gamma chain. F(1) is attached to F(0) by a central stalk formed by the gamma and epsilon chains, while a peripheral stalk is formed by the delta, b and b' chains.

The protein resides in the plastid. The protein localises to the organellar chromatophore thylakoid membrane. Its function is as follows. F(1)F(0) ATP synthase produces ATP from ADP in the presence of a proton or sodium gradient. F-type ATPases consist of two structural domains, F(1) containing the extramembraneous catalytic core and F(0) containing the membrane proton channel, linked together by a central stalk and a peripheral stalk. During catalysis, ATP synthesis in the catalytic domain of F(1) is coupled via a rotary mechanism of the central stalk subunits to proton translocation. Functionally, this protein is part of the stalk that links CF(0) to CF(1). It either transmits conformational changes from CF(0) to CF(1) or is implicated in proton conduction. This is ATP synthase subunit delta, organellar chromatophore from Paulinella chromatophora.